Consider the following 256-residue polypeptide: Thiazole synthase (256 aa).

Lysine 98 acts as the Schiff-base intermediate with DXP in catalysis. 1-deoxy-D-xylulose 5-phosphate is bound by residues glycine 159, 185-186 (AG), and 207-208 (NT).

Belongs to the ThiG family. As to quaternary structure, homotetramer. Forms heterodimers with either ThiH or ThiS.

The protein resides in the cytoplasm. The catalysed reaction is [ThiS sulfur-carrier protein]-C-terminal-Gly-aminoethanethioate + 2-iminoacetate + 1-deoxy-D-xylulose 5-phosphate = [ThiS sulfur-carrier protein]-C-terminal Gly-Gly + 2-[(2R,5Z)-2-carboxy-4-methylthiazol-5(2H)-ylidene]ethyl phosphate + 2 H2O + H(+). It participates in cofactor biosynthesis; thiamine diphosphate biosynthesis. Catalyzes the rearrangement of 1-deoxy-D-xylulose 5-phosphate (DXP) to produce the thiazole phosphate moiety of thiamine. Sulfur is provided by the thiocarboxylate moiety of the carrier protein ThiS. In vitro, sulfur can be provided by H(2)S. This is Thiazole synthase from Aliivibrio fischeri (strain ATCC 700601 / ES114) (Vibrio fischeri).